Reading from the N-terminus, the 188-residue chain is Xanthine phosphoribosyltransferase (188 aa).

L20 and N27 together coordinate xanthine. Residue 127 to 131 (AYGNA) participates in 5-phospho-alpha-D-ribose 1-diphosphate binding. K155 serves as a coordination point for xanthine.

It belongs to the purine/pyrimidine phosphoribosyltransferase family. Xpt subfamily. As to quaternary structure, homodimer.

It is found in the cytoplasm. It catalyses the reaction XMP + diphosphate = xanthine + 5-phospho-alpha-D-ribose 1-diphosphate. It participates in purine metabolism; XMP biosynthesis via salvage pathway; XMP from xanthine: step 1/1. Functionally, converts the preformed base xanthine, a product of nucleic acid breakdown, to xanthosine 5'-monophosphate (XMP), so it can be reused for RNA or DNA synthesis. This Parabacteroides distasonis (strain ATCC 8503 / DSM 20701 / CIP 104284 / JCM 5825 / NCTC 11152) protein is Xanthine phosphoribosyltransferase.